The sequence spans 976 residues: Chloride channel protein 1 (976 aa).

Residues 1–118 (MQPSQSLRRG…VVRRKLGEDW (118 aa)) are Cytoplasmic-facing. Residues 71–92 (DKEQDTGMSKKMGSSESMDSKD) are disordered. Residues 77–87 (GMSKKMGSSES) are compositionally biased toward low complexity. Residues 119–150 (IFLVLLGLLMALVSWSMDYVSAKSLQAYKWSY) form a helical membrane-spanning segment. Residues 151–158 (YQMQPNLP) lie on the Extracellular side of the membrane. A helical membrane pass occupies residues 159-179 (LQYLVWVTFPLTLILFSAVFC). At 180–183 (HLIS) the chain is on the cytoplasmic side. Positions 184 to 189 (PQAVGS) form an intramembrane region, note=Loop between two helices. Residues 188-192 (GSGIP) carry the Selectivity filter part_1 motif. Ser189 provides a ligand contact to chloride. The segment at residues 190-195 (GIPEMK) is an intramembrane region (helical). At 196-208 (TILRGVILKEYLT) the chain is on the cytoplasmic side. Positions 209–224 (LKAFVAKVVALTAGLG) form an intramembrane region, helical. The note=Loop between two helices intramembrane region spans 225–230 (SGIPVG). The Selectivity filter part_2 signature appears at 230 to 234 (GKEGP). The segment at residues 231–246 (KEGPFVHIASICAAVL) is an intramembrane region (helical). Residues 247–268 (SKFMSMFCGVYEQPYYYTDMLT) are Cytoplasmic-facing. 2 intramembrane regions (helical) span residues 269–280 (VGCAVGVGCCFG) and 281–290 (TPLGGVLFSI). The Cytoplasmic portion of the chain corresponds to 291 to 301 (EVTSTYFAVRN). Residues 302-321 (YWRGFFAATFSAFVFRVLAV) form a helical membrane-spanning segment. Residues 322-347 (WNKDAVTITALFRTNFRMDFPFDLQE) lie on the Extracellular side of the membrane. A helical transmembrane segment spans residues 348–376 (LPAFAIIGICCGFLGAVFVYLHRQVMLGV). At 377 to 390 (RKHKALSQFLAKHR) the chain is on the cytoplasmic side. The helical transmembrane segment at 391–408 (LLYPGIVTFIIASFTFPP) threads the bilayer. Residues 409-414 (GIGQFM) are Extracellular-facing. The segment at residues 415–418 (AGEL) is an intramembrane region (note=Loop between two helices). Positions 419–426 (MPREAIST) form an intramembrane region, helical. Residues 427–457 (LFDNNTWVKHVGDPESLGRSAVWIHPRVNVI) lie on the Extracellular side of the membrane. An intramembrane region (helical) is located at residues 458-475 (IIIFLFFIMKFWMSIVAT). Residues 476–482 (TMPIPCG) constitute an intramembrane region (note=Loop between two helices). A Selectivity filter part_3 motif is present at residues 482 to 486 (GGFMP). An intramembrane region (helical) is located at residues 483–498 (GFMPVFVLGAAFGRLV). Phe484 serves as a coordination point for chloride. Over 499–521 (GEIMAMLFPDGILFDDIIYKILP) the chain is Extracellular. The helical intramembrane region spans 522-538 (GGYAVIGAAALTGAVSH). The segment at residues 539-540 (TV) is an intramembrane region (note=Loop between two helices). The helical intramembrane region spans 541–554 (STAVICFELTGQIA). At 555-557 (HIL) the chain is on the extracellular side. The helical intramembrane region spans 558 to 571 (PMMVAVILANMVAQ). An intramembrane region (note=Loop between two helices) is located at residues 572 to 575 (SLQP). Residues 576-578 (SLY) constitute an intramembrane region (helical). Tyr578 serves as a coordination point for chloride. The Cytoplasmic segment spans residues 579 to 976 (DSIIQVKKLP…DEEDEDELIL (398 aa)). A CBS 1 domain is found at 609–668 (MVRDVKFVSATCTYGELRTLLQTTTVKTLPLVDSKDSMILLGSVERSELQSLLQRHLGPE). The disordered stretch occupies residues 707-759 (DEDEDEDLSGKPELPPLPPPHPLPSAPLSSEESNGPLPSHKQQPEAPEPADQR). The span at 719–731 (ELPPLPPPHPLPS) shows a compositional bias: pro residues. Positions 816–871 (IDQSPFQLVEQTSLHKTHTLFSLLGLHLAYVTSMGKLRGVLALEELQKAIEGHTKS) constitute a CBS 2 domain. Positions 872–976 (GVQLRPPLAS…DEEDEDELIL (105 aa)) are disordered. The residue at position 881 (Ser881) is a Phosphoserine. Residues 914 to 925 (SPEPPAPSPSPA) show a composition bias toward pro residues. Acidic residues-rich tracts occupy residues 938–955 (ELEE…EELA) and 967–976 (DEEDEDELIL).

This sequence belongs to the chloride channel (TC 2.A.49) family. ClC-1/CLCN1 subfamily. As to quaternary structure, homodimer.

The protein localises to the cell membrane. The protein resides in the sarcolemma. It is found in the T-tubule. It carries out the reaction chloride(in) = chloride(out). The enzyme catalyses thiocyanate(in) = thiocyanate(out). It catalyses the reaction bromide(in) = bromide(out). The catalysed reaction is nitrate(in) = nitrate(out). It carries out the reaction iodide(out) = iodide(in). Its activity is regulated as follows. Modulated by membrane voltage with depolarization favouring channel opening and hyperpolarization favouring channel closure. Inhibited by acidic pH and ATP binding due to a shift of voltage dependence of common gating to more positive voltages. Inhibited by 9-anthracene-carboxylic. Functionally, voltage-gated chloride channel involved in skeletal muscle excitability. Generates most of the plasma membrane chloride conductance in skeletal muscle fibers, stabilizes the resting membrane potential and contributes to the repolarization phase during action potential firing. Forms a homodimeric channel where each subunit has its own ion conduction pathway. Conducts double-barreled currents controlled by two types of gates, two fast glutamate gates that control each subunit independently and a slow common gate that opens and shuts off both subunits simultaneously. Has a significant open probability at muscle resting potential and is further activated upon membrane depolarization. Permeable to small monovalent anions with ion selectivity for chloride &gt; thiocyanate &gt; bromide &gt; nitrate &gt; iodide. The chain is Chloride channel protein 1 (CLCN1) from Canis lupus familiaris (Dog).